The primary structure comprises 165 residues: Phosphopantetheine adenylyltransferase (165 aa).

Thr-10 is a binding site for substrate. ATP contacts are provided by residues 10 to 11 (TF) and His-18. Lys-42, Leu-75, and Arg-89 together coordinate substrate. ATP-binding positions include 90 to 92 (GLR), Glu-100, and 125 to 131 (YTYVASS).

It belongs to the bacterial CoaD family. In terms of assembly, homohexamer. Requires Mg(2+) as cofactor.

It is found in the cytoplasm. The catalysed reaction is (R)-4'-phosphopantetheine + ATP + H(+) = 3'-dephospho-CoA + diphosphate. Its pathway is cofactor biosynthesis; coenzyme A biosynthesis; CoA from (R)-pantothenate: step 4/5. Its function is as follows. Reversibly transfers an adenylyl group from ATP to 4'-phosphopantetheine, yielding dephospho-CoA (dPCoA) and pyrophosphate. The chain is Phosphopantetheine adenylyltransferase from Chlorobium phaeobacteroides (strain BS1).